Here is a 333-residue protein sequence, read N- to C-terminus: Photosystem II assembly lipoprotein Ycf48 (333 aa).

Positions 1–23 (MNRLLSSAVNLLLVLVLGVGLSG) are cleaved as a signal peptide. Cysteine 24 carries the N-palmitoyl cysteine lipid modification. Cysteine 24 is lipidated: S-diacylglycerol cysteine.

It belongs to the Ycf48 family. As to quaternary structure, part of early PSII assembly complexes which includes D1 (psbA) and PsbI; not found in mature PSII. Binds to the lumenal side of PSII complexes. Interacts with YidC.

The protein localises to the cellular thylakoid membrane. Its function is as follows. A factor required for optimal assembly of photosystem II (PSII), acting in the early stages of PSII assembly. Also plays a role in replacement of photodamaged D1 (psbA). Assists YidC in synthesis of chlorophyll-binding proteins. The protein is Photosystem II assembly lipoprotein Ycf48 of Synechococcus sp. (strain CC9902).